A 241-amino-acid chain; its full sequence is Ribonuclease 3 (241 aa).

The region spanning 8-137 is the RNase III domain; it reads LTLLKNRLGI…LLGAVYLDQG (130 aa). A Mg(2+)-binding site is contributed by Glu-50. Asp-54 is an active-site residue. Positions 123 and 126 each coordinate Mg(2+). Glu-126 is a catalytic residue. One can recognise a DRBM domain in the interval 164 to 233; the sequence is DYKTELQELV…AKKALMKSDL (70 aa). The disordered stretch occupies residues 214 to 241; sequence RSKKEAEQQAAKKALMKSDLGSACNHKK.

Belongs to the ribonuclease III family. In terms of assembly, homodimer. The cofactor is Mg(2+).

The protein resides in the cytoplasm. The enzyme catalyses Endonucleolytic cleavage to 5'-phosphomonoester.. Digests double-stranded RNA. Involved in the processing of primary rRNA transcript to yield the immediate precursors to the large and small rRNAs (23S and 16S). Processes some mRNAs, and tRNAs when they are encoded in the rRNA operon. Processes pre-crRNA and tracrRNA of type II CRISPR loci if present in the organism. The protein is Ribonuclease 3 of Pelotomaculum thermopropionicum (strain DSM 13744 / JCM 10971 / SI).